Reading from the N-terminus, the 197-residue chain is Adenylyl-sulfate kinase (197 aa).

33 to 40 provides a ligand contact to ATP; the sequence is GLSGSGKS. The Phosphoserine intermediate role is filled by S107.

This sequence belongs to the APS kinase family.

The enzyme catalyses adenosine 5'-phosphosulfate + ATP = 3'-phosphoadenylyl sulfate + ADP + H(+). It functions in the pathway sulfur metabolism; hydrogen sulfide biosynthesis; sulfite from sulfate: step 2/3. Catalyzes the synthesis of activated sulfate. The protein is Adenylyl-sulfate kinase of Bacillus licheniformis (strain ATCC 14580 / DSM 13 / JCM 2505 / CCUG 7422 / NBRC 12200 / NCIMB 9375 / NCTC 10341 / NRRL NRS-1264 / Gibson 46).